The sequence spans 130 residues: 3-aminoacrylate deaminase RutC (130 aa).

Belongs to the RutC family.

It carries out the reaction (Z)-3-aminoacrylate + H2O + H(+) = 3-oxopropanoate + NH4(+). Functionally, involved in pyrimidine catabolism. Catalyzes the deamination of 3-aminoacrylate to malonic semialdehyde, a reaction that can also occur spontaneously. RutC may facilitate the reaction and modulate the metabolic fitness, rather than catalyzing essential functions. In Haliangium ochraceum (strain DSM 14365 / JCM 11303 / SMP-2), this protein is 3-aminoacrylate deaminase RutC.